Consider the following 202-residue polypeptide: Pectinesterase inhibitor 11 (202 aa).

A signal peptide spans 1 to 21; that stretch reads MAKQIFYTLFLFLLSTAILTA. A disulfide bridge links cysteine 43 with cysteine 52. The N-linked (GlcNAc...) asparagine glycan is linked to asparagine 76. An intrachain disulfide couples cysteine 109 to cysteine 160.

The protein belongs to the PMEI family.

It localises to the secreted. Its subcellular location is the extracellular space. The protein localises to the apoplast. Pectin methylesterase (PME) inhibitor involved in the maintenance of cell wall integrity in response to necrotrophic pathogens. Modulates PME activity and pectin methylesterification during infection by Botrytis cinerea and contributes to resistance against the pathogen. The protein is Pectinesterase inhibitor 11 of Arabidopsis thaliana (Mouse-ear cress).